A 118-amino-acid polypeptide reads, in one-letter code: REPTOR-binding partner (118 aa).

Polar residues predominate over residues 1–20 (MADMEIQSNKMSITEETQVQ). The segment at 1–53 (MADMEIQSNKMSITEETQVQTRKECGKRGRKPGRKTSTEKLDMKAKLERSRQS) is disordered. Residues 36 to 53 (TSTEKLDMKAKLERSRQS) show a composition bias toward basic and acidic residues. The basic motif stretch occupies residues 40–77 (KLDMKAKLERSRQSARECRARKKLRYQYLEELVADREK). One can recognise a bZIP domain in the interval 40–90 (KLDMKAKLERSRQSARECRARKKLRYQYLEELVADREKAVVALRTELERLI). The segment at 82 to 89 (LRTELERL) is leucine-zipper.

The protein belongs to the bZIP family. ATF subfamily. Homodimer. Interacts (via C-terminus) with REPTOR (via C-terminus).

It localises to the nucleus. The protein resides in the chromosome. In terms of biological role, transcriptional regulator that acts in the TORC1 signaling pathway to regulate energy homeostasis and promote survival during nutrient deprivation. Interacts with REPTOR to form a transcriptional activator complex that functions downstream of TORC1 to up-regulate the expression of most target genes induced by TORC1 inhibition. In the complex, acts to enhance the binding of the transcriptional activator REPTOR to the regulatory sequences of target genes. Under normal conditions TORC1 is active, inhibiting the formation of the REPTOR/REPTOR-BP complex by phosphorylating REPTOR and mediates its cytoplasmic retention by forming a docking site for 14-3-3 proteins. Upon TORC1 inhibition resulting from nutrient stress, REPTOR is recruited into the nucleus where it interacts with REPTOR-BP and together they maintain organismal metabolism by activating the expression of target stress response genes including those involved in glycogenesis and triglyceride biosynthesis. The complex also appears to negatively regulate some aspects of TORC1-dependent larval growth. The protein is REPTOR-binding partner of Drosophila melanogaster (Fruit fly).